The sequence spans 360 residues: UPF0284 protein APE_2029.1 (360 aa).

Belongs to the UPF0284 family.

In Aeropyrum pernix (strain ATCC 700893 / DSM 11879 / JCM 9820 / NBRC 100138 / K1), this protein is UPF0284 protein APE_2029.1.